Here is a 358-residue protein sequence, read N- to C-terminus: Type II restriction enzyme HpaII (358 aa).

As to quaternary structure, homodimer.

The catalysed reaction is Endonucleolytic cleavage of DNA to give specific double-stranded fragments with terminal 5'-phosphates.. In terms of biological role, an E and P subtype restriction enzyme that recognizes the double-stranded sequence 5'-CCGG-3' and cleaves after C-1. This is Type II restriction enzyme HpaII from Haemophilus parainfluenzae.